The following is a 364-amino-acid chain: Anhydro-N-acetylmuramic acid kinase (364 aa).

11-18 contacts ATP; that stretch reads GSSLDGID.

It belongs to the anhydro-N-acetylmuramic acid kinase family.

It carries out the reaction 1,6-anhydro-N-acetyl-beta-muramate + ATP + H2O = N-acetyl-D-muramate 6-phosphate + ADP + H(+). Its pathway is amino-sugar metabolism; 1,6-anhydro-N-acetylmuramate degradation. It participates in cell wall biogenesis; peptidoglycan recycling. Its function is as follows. Catalyzes the specific phosphorylation of 1,6-anhydro-N-acetylmuramic acid (anhMurNAc) with the simultaneous cleavage of the 1,6-anhydro ring, generating MurNAc-6-P. Is required for the utilization of anhMurNAc either imported from the medium or derived from its own cell wall murein, and thus plays a role in cell wall recycling. This chain is Anhydro-N-acetylmuramic acid kinase, found in Pseudomonas savastanoi pv. phaseolicola (strain 1448A / Race 6) (Pseudomonas syringae pv. phaseolicola (strain 1448A / Race 6)).